The sequence spans 223 residues: Endonuclease III (223 aa).

One can recognise a HhH domain in the interval 118 to 137 (RDFLTAIEGIGDKTADVVLL). Cys198, Cys205, Cys208, and Cys214 together coordinate [4Fe-4S] cluster.

This sequence belongs to the Nth/MutY family. Requires [4Fe-4S] cluster as cofactor.

It catalyses the reaction 2'-deoxyribonucleotide-(2'-deoxyribose 5'-phosphate)-2'-deoxyribonucleotide-DNA = a 3'-end 2'-deoxyribonucleotide-(2,3-dehydro-2,3-deoxyribose 5'-phosphate)-DNA + a 5'-end 5'-phospho-2'-deoxyribonucleoside-DNA + H(+). Probably part of a 4-gene DNA damage response locus in which the upstream ups system, in combination with this downstream locus, functions in homologous recombination to rescue Sulfolobales from DNA-damaging threats. DNA repair enzyme that has both DNA N-glycosylase activity and AP-lyase activity. The DNA N-glycosylase activity releases various damaged pyrimidines from DNA by cleaving the N-glycosidic bond, leaving an AP (apurinic/apyrimidinic) site. The AP-lyase activity cleaves the phosphodiester bond 3' to the AP site by a beta-elimination, leaving a 3'-terminal unsaturated sugar and a product with a terminal 5'-phosphate. Nicks UV-treated plasmid DNA in a dose-dependent manner, has no activity on untreated DNA. The chain is Endonuclease III from Sulfolobus acidocaldarius (strain ATCC 33909 / DSM 639 / JCM 8929 / NBRC 15157 / NCIMB 11770).